A 1943-amino-acid chain; its full sequence is Beta-L-arabinobiosidase (1943 aa).

The segment at residues 1-32 is a signal peptide (tat-type signal); it reads MHHSTRKRWLASIGAVAAVATLATGGAVTAQA. 2 F5/8 type C domains span residues 892–1049 and 1142–1302; these read TNVD…AYNT and SKEI…AYAI. The 97-residue stretch at 1061 to 1157 folds into the PKD domain; it reads TPQVDAYVSS…HGIPSDGTVN (97 aa). 3 FIVAR domains span residues 1678 to 1716, 1746 to 1790, and 1823 to 1864; these read ANGL…EQVA, DAAK…AAVQ, and QAKK…VDAA. Positions 1875–1906 are disordered; that stretch reads TKVEQKPGSQQPGVTDTDKDDKDNKGDRVPPT. The span at 1890–1902 shows a compositional bias: basic and acidic residues; the sequence is DTDKDDKDNKGDR. Residues 1908-1928 traverse the membrane as a helical segment; that stretch reads AAVSVVAAAAVLLTAAGVTIL.

The protein belongs to the glycosyl hydrolase 121 family. Post-translationally, predicted to be exported by the Tat system. The position of the signal peptide cleavage has not been experimentally proven.

The protein resides in the membrane. It catalyses the reaction 4-O-(beta-L-arabinofuranosyl-(1-&gt;2)-beta-L-arabinofuranosyl-(1-&gt;2)-beta-L-arabinofuranosyl)-(2S,4S)-4-hydroxyproline + H2O = 4-O-(beta-L-arabinofuranosyl)-(2S,4S)-4-hydroxyproline + beta-L-arabinofuranosyl-(1-&gt;2)-beta-L-arabinofuranose. Its function is as follows. Beta-L-arabinobiosidase that removes L-arabinofuranose-beta-1,2-L-arabinofuranose disaccharide from various substrates such as carrot extensin and potato lectin. Also acts on L-arabinofuranose (Ara)-beta-1,2-Ara-beta-1,2-Ara-beta-Hyp (Ara(3)-Hyp) but not on Ara-beta-1,3-Ara-beta-1,2-Ara-beta-1,2-Ara-beta--Hyp (Ara(4)-Hyp) or Ara-beta-1,2-Ara-beta-Hyp (Ara(2)-Hyp), suggesting a specificity for unmodified Ara(3)-Hyp substrate. In the presence of 1-alkanols, shows transglycosylation activity, retaining the anomeric configuration of the arabinofuranose residue. The polypeptide is Beta-L-arabinobiosidase (hypBA2) (Bifidobacterium longum subsp. longum (strain ATCC 15707 / DSM 20219 / JCM 1217 / NCTC 11818 / E194b)).